Consider the following 960-residue polypeptide: ATPase 4, plasma membrane-type (960 aa).

Residues methionine 1 to phenylalanine 69 are Cytoplasmic-facing. A helical membrane pass occupies residues leucine 70–isoleucine 89. Topologically, residues alanine 90–tryptophan 101 are extracellular. Residues glutamine 102–glutamate 122 traverse the membrane as a helical segment. Over asparagine 123–isoleucine 251 the chain is Cytoplasmic. The chain crosses the membrane as a helical span at residues glycine 252–proline 272. Residues isoleucine 273–glycine 281 lie on the Extracellular side of the membrane. Residues isoleucine 282 to threonine 299 traverse the membrane as a helical segment. Residues valine 300–lysine 651 are Cytoplasmic-facing. The active-site 4-aspartylphosphate intermediate is aspartate 337. Residues aspartate 596 and aspartate 600 each contribute to the Mg(2+) site. The helical transmembrane segment at asparagine 652 to leucine 673 threads the bilayer. Residues isoleucine 674–aspartate 678 lie on the Extracellular side of the membrane. Residues phenylalanine 679–aspartate 701 form a helical membrane-spanning segment. The Cytoplasmic portion of the chain corresponds to arginine 702–isoleucine 717. The helical transmembrane segment at phenylalanine 718 to valine 738 threads the bilayer. At serine 739–arginine 763 the chain is on the extracellular side. A helical transmembrane segment spans residues lysine 764–threonine 784. Topologically, residues arginine 785 to glycine 796 are cytoplasmic. Residues isoleucine 797 to alanine 817 form a helical membrane-spanning segment. Topologically, residues asparagine 818–glutamate 825 are extracellular. Residues glycine 826–leucine 846 traverse the membrane as a helical segment. The Cytoplasmic segment spans residues aspartate 847–valine 960. A Phosphothreonine modification is found at threonine 893. Serine 942 carries the post-translational modification Phosphoserine. The interval tyrosine 958–valine 960 is interaction with 14-3-3 proteins. Position 959 is a phosphothreonine (threonine 959).

It belongs to the cation transport ATPase (P-type) (TC 3.A.3) family. Type IIIA subfamily. In terms of assembly, binds to 14-3-3 proteins. The binding is induced by phosphorylation of Thr-959. Binding to 14-3-3 proteins activates the H(+)-ATPase. As to expression, expressed in guard cells and roots.

It is found in the cell membrane. The enzyme catalyses ATP + H2O + H(+)(in) = ADP + phosphate + 2 H(+)(out). Its function is as follows. The plasma membrane H(+) ATPase of plants and fungi generates a proton gradient that drives the active transport of nutrients by H(+)-symport. The resulting external acidification and/or internal alkinization may mediate growth responses. This Arabidopsis thaliana (Mouse-ear cress) protein is ATPase 4, plasma membrane-type (AHA4).